The sequence spans 86 residues: Large ribosomal subunit protein bL27 (86 aa).

A disordered region spans residues 1–26 (MAHKKAAGSTRNGRDSESKRLGVKRY).

This sequence belongs to the bacterial ribosomal protein bL27 family.

The protein is Large ribosomal subunit protein bL27 of Marinobacter nauticus (strain ATCC 700491 / DSM 11845 / VT8) (Marinobacter aquaeolei).